The primary structure comprises 315 residues: Tyrosine recombinase XerC (315 aa).

Residues 13–104 form the Core-binding (CB) domain; the sequence is ADLAAAREEW…GVRSLLRHLE (92 aa). The region spanning 125–309 is the Tyr recombinase domain; the sequence is SLPKPLTADD…DTQRLLEVYD (185 aa). Catalysis depends on residues Arg168, Lys193, His261, Arg264, and His287. Tyr296 serves as the catalytic O-(3'-phospho-DNA)-tyrosine intermediate.

Belongs to the 'phage' integrase family. XerC subfamily. In terms of assembly, forms a cyclic heterotetrameric complex composed of two molecules of XerC and two molecules of XerD.

Its subcellular location is the cytoplasm. Functionally, site-specific tyrosine recombinase, which acts by catalyzing the cutting and rejoining of the recombining DNA molecules. The XerC-XerD complex is essential to convert dimers of the bacterial chromosome into monomers to permit their segregation at cell division. It also contributes to the segregational stability of plasmids. This chain is Tyrosine recombinase XerC, found in Brucella melitensis biotype 1 (strain ATCC 23456 / CCUG 17765 / NCTC 10094 / 16M).